An 85-amino-acid chain; its full sequence is Translation initiation factor IF-1 (85 aa).

One can recognise an S1-like domain in the interval 1–72 (MAKEELLEMR…TKARITYRFM (72 aa)).

Belongs to the IF-1 family. As to quaternary structure, component of the 30S ribosomal translation pre-initiation complex which assembles on the 30S ribosome in the order IF-2 and IF-3, IF-1 and N-formylmethionyl-tRNA(fMet); mRNA recruitment can occur at any time during PIC assembly.

The protein resides in the cytoplasm. Functionally, one of the essential components for the initiation of protein synthesis. Stabilizes the binding of IF-2 and IF-3 on the 30S subunit to which N-formylmethionyl-tRNA(fMet) subsequently binds. Helps modulate mRNA selection, yielding the 30S pre-initiation complex (PIC). Upon addition of the 50S ribosomal subunit IF-1, IF-2 and IF-3 are released leaving the mature 70S translation initiation complex. This Erythrobacter litoralis (strain HTCC2594) protein is Translation initiation factor IF-1.